Here is a 568-residue protein sequence, read N- to C-terminus: Urease subunit alpha (568 aa).

A Urease domain is found at 133–568 (GGVDTHIHFI…LPLAQKYFLF (436 aa)). Ni(2+) is bound by residues His138, His140, and Lys221. Lys221 carries the N6-carboxylysine modification. His223 lines the substrate pocket. Ni(2+) contacts are provided by His250 and His276. His324 serves as the catalytic Proton donor. Asp364 is a binding site for Ni(2+).

This sequence belongs to the metallo-dependent hydrolases superfamily. Urease alpha subunit family. In terms of assembly, heterohexamer of 3 UreC (alpha) and 3 UreAB (gamma/beta) subunits. The cofactor is Ni cation. Post-translationally, carboxylation allows a single lysine to coordinate two nickel ions.

The protein resides in the cytoplasm. It catalyses the reaction urea + 2 H2O + H(+) = hydrogencarbonate + 2 NH4(+). Its pathway is nitrogen metabolism; urea degradation; CO(2) and NH(3) from urea (urease route): step 1/1. The chain is Urease subunit alpha from Deinococcus radiodurans (strain ATCC 13939 / DSM 20539 / JCM 16871 / CCUG 27074 / LMG 4051 / NBRC 15346 / NCIMB 9279 / VKM B-1422 / R1).